Reading from the N-terminus, the 472-residue chain is 3-isopropylmalate dehydratase large subunit (472 aa).

[4Fe-4S] cluster is bound by residues cysteine 353, cysteine 414, and cysteine 417.

Belongs to the aconitase/IPM isomerase family. LeuC type 1 subfamily. Heterodimer of LeuC and LeuD. It depends on [4Fe-4S] cluster as a cofactor.

The catalysed reaction is (2R,3S)-3-isopropylmalate = (2S)-2-isopropylmalate. It functions in the pathway amino-acid biosynthesis; L-leucine biosynthesis; L-leucine from 3-methyl-2-oxobutanoate: step 2/4. In terms of biological role, catalyzes the isomerization between 2-isopropylmalate and 3-isopropylmalate, via the formation of 2-isopropylmaleate. In Psychrobacter arcticus (strain DSM 17307 / VKM B-2377 / 273-4), this protein is 3-isopropylmalate dehydratase large subunit.